The sequence spans 473 residues: Glucose-1-phosphate adenylyltransferase small subunit, chloroplastic/amyloplastic (473 aa).

Positions M1–N36 are disordered. Positions S16–N36 are enriched in basic and acidic residues.

It belongs to the bacterial/plant glucose-1-phosphate adenylyltransferase family. As to quaternary structure, heterotetramer. In terms of tissue distribution, abundantly expressed in the whole grains, a slightly less abundant expression is seen in leaves, while a low level expression is seen in the roots. A greater expression is seen in the endosperm than in the embryo and pericarp layers.

Its subcellular location is the plastid. It is found in the chloroplast. The protein localises to the amyloplast. It catalyses the reaction alpha-D-glucose 1-phosphate + ATP + H(+) = ADP-alpha-D-glucose + diphosphate. It functions in the pathway glycan biosynthesis; starch biosynthesis. With respect to regulation, insensitive to 3'phosphoglycerate and orthophosphate. Functionally, this protein plays a role in synthesis of starch. It catalyzes the synthesis of the activated glycosyl donor, ADP-glucose from Glc-1-P and ATP. In Triticum aestivum (Wheat), this protein is Glucose-1-phosphate adenylyltransferase small subunit, chloroplastic/amyloplastic (AGP-S).